Reading from the N-terminus, the 502-residue chain is Probable cobyric acid synthase (502 aa).

The 199-residue stretch at 250-448 (KITIGTLRLP…FHGIFHNFEF (199 aa)) folds into the GATase cobBQ-type domain. The active-site Nucleophile is the C330. H440 is a catalytic residue.

This sequence belongs to the CobB/CobQ family. CobQ subfamily.

It functions in the pathway cofactor biosynthesis; adenosylcobalamin biosynthesis. Functionally, catalyzes amidations at positions B, D, E, and G on adenosylcobyrinic A,C-diamide. NH(2) groups are provided by glutamine, and one molecule of ATP is hydrogenolyzed for each amidation. The sequence is that of Probable cobyric acid synthase from Methanosphaera stadtmanae (strain ATCC 43021 / DSM 3091 / JCM 11832 / MCB-3).